Here is a 121-residue protein sequence, read N- to C-terminus: Small ribosomal subunit protein uS13 (121 aa).

Positions 99 to 121 (GQRTRTNARTRRGARKTVAGKKK) are disordered. Residues 100–121 (QRTRTNARTRRGARKTVAGKKK) are compositionally biased toward basic residues.

This sequence belongs to the universal ribosomal protein uS13 family. In terms of assembly, part of the 30S ribosomal subunit. Forms a loose heterodimer with protein S19. Forms two bridges to the 50S subunit in the 70S ribosome.

Its function is as follows. Located at the top of the head of the 30S subunit, it contacts several helices of the 16S rRNA. In the 70S ribosome it contacts the 23S rRNA (bridge B1a) and protein L5 of the 50S subunit (bridge B1b), connecting the 2 subunits; these bridges are implicated in subunit movement. Contacts the tRNAs in the A and P-sites. The polypeptide is Small ribosomal subunit protein uS13 (Synechococcus sp. (strain RCC307)).